The primary structure comprises 408 residues: NADH-quinone oxidoreductase subunit D (408 aa).

The protein belongs to the complex I 49 kDa subunit family. In terms of assembly, NDH-1 is composed of 14 different subunits. Subunits NuoB, C, D, E, F, and G constitute the peripheral sector of the complex.

The protein resides in the cell inner membrane. The enzyme catalyses a quinone + NADH + 5 H(+)(in) = a quinol + NAD(+) + 4 H(+)(out). Functionally, NDH-1 shuttles electrons from NADH, via FMN and iron-sulfur (Fe-S) centers, to quinones in the respiratory chain. The immediate electron acceptor for the enzyme in this species is believed to be ubiquinone. Couples the redox reaction to proton translocation (for every two electrons transferred, four hydrogen ions are translocated across the cytoplasmic membrane), and thus conserves the redox energy in a proton gradient. In Campylobacter jejuni subsp. jejuni serotype O:2 (strain ATCC 700819 / NCTC 11168), this protein is NADH-quinone oxidoreductase subunit D.